The primary structure comprises 293 residues: UDP-3-O-acyl-N-acetylglucosamine deacetylase (293 aa).

Positions 79, 236, and 240 each coordinate Zn(2+). The active-site Proton donor is histidine 263.

It belongs to the LpxC family. Zn(2+) serves as cofactor.

The catalysed reaction is a UDP-3-O-[(3R)-3-hydroxyacyl]-N-acetyl-alpha-D-glucosamine + H2O = a UDP-3-O-[(3R)-3-hydroxyacyl]-alpha-D-glucosamine + acetate. It participates in glycolipid biosynthesis; lipid IV(A) biosynthesis; lipid IV(A) from (3R)-3-hydroxytetradecanoyl-[acyl-carrier-protein] and UDP-N-acetyl-alpha-D-glucosamine: step 2/6. Its function is as follows. Catalyzes the hydrolysis of UDP-3-O-myristoyl-N-acetylglucosamine to form UDP-3-O-myristoylglucosamine and acetate, the committed step in lipid A biosynthesis. The protein is UDP-3-O-acyl-N-acetylglucosamine deacetylase of Phenylobacterium zucineum (strain HLK1).